The following is a 519-amino-acid chain: ATP synthase subunit alpha 2 (519 aa).

Position 179–186 (179–186 (GDRQTGKT)) interacts with ATP.

This sequence belongs to the ATPase alpha/beta chains family. F-type ATPases have 2 components, CF(1) - the catalytic core - and CF(0) - the membrane proton channel. CF(1) has five subunits: alpha(3), beta(3), gamma(1), delta(1), epsilon(1). CF(0) has three main subunits: a(1), b(2) and c(9-12). The alpha and beta chains form an alternating ring which encloses part of the gamma chain. CF(1) is attached to CF(0) by a central stalk formed by the gamma and epsilon chains, while a peripheral stalk is formed by the delta and b chains.

It is found in the cell inner membrane. The enzyme catalyses ATP + H2O + 4 H(+)(in) = ADP + phosphate + 5 H(+)(out). Its function is as follows. Produces ATP from ADP in the presence of a proton gradient across the membrane. The alpha chain is a regulatory subunit. The sequence is that of ATP synthase subunit alpha 2 from Syntrophus aciditrophicus (strain SB).